The sequence spans 78 residues: Large ribosomal subunit protein bL28 (78 aa).

The segment at 1 to 31 is disordered; it reads MAAHCQVTGAEPGFGHSISHSHRRNKRRFDP.

Belongs to the bacterial ribosomal protein bL28 family.

This is Large ribosomal subunit protein bL28 from Arthrobacter sp. (strain FB24).